We begin with the raw amino-acid sequence, 176 residues long: Large ribosomal subunit protein eL20A (176 aa).

Belongs to the eukaryotic ribosomal protein eL20 family. As to quaternary structure, component of the large ribosomal subunit (LSU). Mature yeast ribosomes consist of a small (40S) and a large (60S) subunit. The 40S small subunit contains 1 molecule of ribosomal RNA (18S rRNA) and at least 33 different proteins. The large 60S subunit contains 3 rRNA molecules (25S, 5.8S and 5S rRNA) and at least 46 different proteins. eL20 forms multiple interactions with RNA and proteins in the central protuberance, connecting components of core functional centers that are located far apart.

The protein localises to the cytoplasm. Functionally, component of the ribosome, a large ribonucleoprotein complex responsible for the synthesis of proteins in the cell. The small ribosomal subunit (SSU) binds messenger RNAs (mRNAs) and translates the encoded message by selecting cognate aminoacyl-transfer RNA (tRNA) molecules. The large subunit (LSU) contains the ribosomal catalytic site termed the peptidyl transferase center (PTC), which catalyzes the formation of peptide bonds, thereby polymerizing the amino acids delivered by tRNAs into a polypeptide chain. The nascent polypeptides leave the ribosome through a tunnel in the LSU and interact with protein factors that function in enzymatic processing, targeting, and the membrane insertion of nascent chains at the exit of the ribosomal tunnel. The polypeptide is Large ribosomal subunit protein eL20A (rpl2001) (Schizosaccharomyces pombe (strain 972 / ATCC 24843) (Fission yeast)).